Reading from the N-terminus, the 364-residue chain is Leucine dehydrogenase (364 aa).

The active site involves Lys80. Gly180–Tyr186 serves as a coordination point for NAD(+).

This sequence belongs to the Glu/Leu/Phe/Val dehydrogenases family.

It carries out the reaction L-leucine + NAD(+) + H2O = 4-methyl-2-oxopentanoate + NH4(+) + NADH + H(+). The protein operates within amino-acid degradation; L-leucine degradation; 4-methyl-2-oxopentanoate from L-leucine (dehydrogenase route): step 1/1. Its function is as follows. Catalyzes the reversible deamination of L-leucine to 4-methyl-2-oxopentanoate. The protein is Leucine dehydrogenase (yqiT) of Bacillus subtilis (strain 168).